Here is a 383-residue protein sequence, read N- to C-terminus: Guanine nucleotide-binding protein alpha-1 subunit (383 aa).

Residues 1-20 (MGLLCSRSRHHTEDTDENTQ) are disordered. A lipid anchor (N-myristoyl glycine) is attached at G2. The S-palmitoyl cysteine moiety is linked to residue C5. The G-alpha domain occupies 37–383 (HIRKLLLLGA…RRNLLEAGLL (347 aa)). The interval 40-53 (KLLLLGAGESGKST) is G1 motif. 15 residues coordinate GTP: E48, S49, G50, K51, S52, T53, D162, L187, Y188, T193, G221, N287, K288, D290, and A355. S52 is a binding site for Mg(2+). Residues 185–193 (DVLYARVRT) form a G2 motif region. A Mg(2+)-binding site is contributed by T193. Residues 214-223 (YRLFDVGGQR) form a G3 motif region. The interval 283–290 (MLFLNKFD) is G4 motif. The segment at 353 to 358 (TTALDQ) is G5 motif.

The protein belongs to the G-alpha family. G proteins are composed of 3 units; alpha, beta and gamma. The alpha chain contains the guanine nucleotide binding site. Interacts with RGS1, THF1, the pirin protein PRN1, GTG1 and GTG2. Binds to GCR1. May interact with ADT3. No interactions with RACK1A, RACK1B or RACK1C. Interacts with PLDALPHA1. Interacts with CAND2/PMTR1. The cofactor is Mg(2+). As to expression, more abundant in roots and/or leaves.

Its subcellular location is the cell membrane. In terms of biological role, exhibits a fast rate of basal nucleotide exchange. Guanine nucleotide-binding proteins (G proteins) are involved as modulators or transducers in various transmembrane signaling systems. Together with GCR1, may regulate the cell cycle via a signaling cascade that uses phosphatidylinositol-specific phospholipase C (PI-PLC) as an effector and inositol 1,4,5-trisphosphate (IP(3)) as a second messenger. Promotes abscisic acid (ABA) responses in guard cells. Involved in the blue light (BL) signaling. Together with GCR1 and ADT3, required for BL-mediated synthesis of phenylpyruvate and subsequently of phenylalanine (Phe), in etiolated seedlings. Modulates root architecture (e.g. lateral root formation). Negatively regulated by RGS1. In collaboration with CAND2/PMTR1, regulates the melatonin-mediated stomatal closure involving H(2)O(2) and Ca(2+) signals. The chain is Guanine nucleotide-binding protein alpha-1 subunit from Arabidopsis thaliana (Mouse-ear cress).